Reading from the N-terminus, the 340-residue chain is Alcohol dehydrogenase (340 aa).

Zn(2+) is bound by residues Cys40 and His63.

The protein belongs to the zinc-containing alcohol dehydrogenase family. The cofactor is Zn(2+).

It carries out the reaction a primary alcohol + NAD(+) = an aldehyde + NADH + H(+). The enzyme catalyses a secondary alcohol + NAD(+) = a ketone + NADH + H(+). This Rhizobium meliloti (strain 1021) (Ensifer meliloti) protein is Alcohol dehydrogenase (adhA).